A 215-amino-acid chain; its full sequence is NAD(P)H-hydrate epimerase (215 aa).

Residues 10 to 212 (SRELDDKTIN…DIGIYRGNAF (203 aa)) form the YjeF N-terminal domain. 59-63 (NNGGD) provides a ligand contact to (6S)-NADPHX. 2 residues coordinate K(+): N60 and D122. Residues 126–132 (GSGLSRN) and D155 contribute to the (6S)-NADPHX site. S158 is a binding site for K(+).

The protein belongs to the NnrE/AIBP family. K(+) serves as cofactor.

The enzyme catalyses (6R)-NADHX = (6S)-NADHX. The catalysed reaction is (6R)-NADPHX = (6S)-NADPHX. In terms of biological role, catalyzes the epimerization of the S- and R-forms of NAD(P)HX, a damaged form of NAD(P)H that is a result of enzymatic or heat-dependent hydration. This is a prerequisite for the S-specific NAD(P)H-hydrate dehydratase to allow the repair of both epimers of NAD(P)HX. The protein is NAD(P)H-hydrate epimerase of Lentilactobacillus buchneri (strain NRRL B-30929) (Lactobacillus buchneri).